The primary structure comprises 442 residues: Glycoprotein endo-alpha-1,2-mannosidase-like protein (442 aa).

At 1 to 8 the chain is on the cytoplasmic side; sequence MNRLRRKA. The helical; Signal-anchor for type II membrane protein transmembrane segment at 9–29 threads the bilayer; the sequence is CVALLLFTLFIFGTMMGLRTL. At 30–442 the chain is on the lumenal side; sequence KPTDGFSDLA…FSKEKEQWLM (413 aa).

The protein belongs to the glycosyl hydrolase 99 family.

Its subcellular location is the golgi apparatus membrane. This chain is Glycoprotein endo-alpha-1,2-mannosidase-like protein (maneal), found in Danio rerio (Zebrafish).